Reading from the N-terminus, the 196-residue chain is Peptide deformylase (196 aa).

2 residues coordinate Fe cation: cysteine 123 and histidine 166. The active site involves glutamate 167. Histidine 170 contributes to the Fe cation binding site.

It belongs to the polypeptide deformylase family. Fe(2+) serves as cofactor.

It catalyses the reaction N-terminal N-formyl-L-methionyl-[peptide] + H2O = N-terminal L-methionyl-[peptide] + formate. Its function is as follows. Removes the formyl group from the N-terminal Met of newly synthesized proteins. Requires at least a dipeptide for an efficient rate of reaction. N-terminal L-methionine is a prerequisite for activity but the enzyme has broad specificity at other positions. This is Peptide deformylase from Lactococcus lactis subsp. lactis (strain IL1403) (Streptococcus lactis).